The sequence spans 2274 residues: MTSSMASYEQLVRQVEALKAENTHLRQELRDNSSHLSKLETETSGMKEVLKHLQGKLEQEARVLVSSGQTEVLEQLKALQTDISSLYNLKFHAPALGPEPAARTPEGSPVHGSGPSKDSFGELSRATIRLLEELDQERCFLLSEIEKEEKEKLWYYSQLQGLSKRLDELPHVDTFSMQMDLIRQQLEFEAQHIRSLMEERFGTSDEMVQRAQIRASRLEQIDKELLEAQDRVQQTEPQALLAVKPVAVEEEQEAEVPTHPEDGTPQPGNSKVEVVFWLLSMLATRDQEDTARTLLAMSSSPESCVAMRRSGCLPLLLQILHGTEAGSVGRAGIPGAPGAKDARMRANAALHNIVFSQPDQGLARKEMRVLHVLEQIRAYCETCWDWLQARDSGTETPVPIEPQICQATCAVMKLSFDEEYRRAMNELGGLQAVAELLQVDYEMHKMTRDPLNLALRRYAGMTLTNLTFGDVANKATLCARRGCMEAIVAQLGSESEELHQVVSSILRNLSWRADINSKKVLREVGSMTALMECVLRASKESTLKSVLSALWNLSAHSTENKAAICQVDGALGFLVSTLTYRCQGNSLAVIESGGGILRNVSSLIATREDYRQVLRDHNCLQTLLQHLTSHSLTIVSNACGTLWNLSARSPRDQELLWDLGAVGMLRNLVHSKHKMIAMGSAAALRNLLAHRPAKYQAAAMAVSPGTCVPSLYVRKQRALEAELDTRHLVHALGHLEKQSLPEAETTSKKPLPPLRHLDGLVQDYASDSGCFDDDDAPSLAAAATTAEPASPAVMSMFLGGPFLQGQALARTPPARQGGLEAEKEAGGEAAVAAKAKAKLALAVARIDRLVEDISALHTSSDDSFSLSSGDPGQEAPREGRAQSCSPCRGTEGGRREAGSRAHPLLRLKAAHTSLSNDSLNSGSTSDGYCTREHMTPCPLAALAEHRDDPVRGQTRPRRLDLDLPSRAELPARDTAATDARVRTIKLSPTYQHVPLLDGAAGAGVRPLVGPGTSPGARKQAWIPADSLSKVPEKLVASPLPIASKVLQKLVAQDGPMSLSRCSSLSSLSSTGHAVPSQAENLDSDSSLEGLEEAGPGEAELGRAWRASGSTSLPVSIPAPQRGRSRGLGVEDATPSSSSENCVQETPLVLSRCSSVSSLGSFESRSIASSIPSDPCSGLGSGTVSPSELPDSPGQTMPPSRSKTPPAPPGQPETSQFSLQWESYVKRFLDIADCRERCQPPSELDAGSVRFTVEKPDENFSCASSLSALALHELYVQQDVELRLRPPACPERAVGGGGHRRRDEAASRLDGPAPAGSRARSATDKELEALRECLGAAMPARLRKVASALVPGRRSLPVPVYMLVPAPARGDDSGTDSAEGTPVNFSSAASLSDETLQGPSRDKPAGPGDRQKPTGRAAPARQTRSHRPKAAGAGKSTEHTRGPCRNRAGLELPLSRPQSARSNRDSSCQTRTRGDGALQSLCLTTPTEEAVYCFYDSDEEPPATAPPPRRASAIPRALKREKPAGRKETPSRAAQPATLPVRAQPRLIVDETPPCYSLTSSASSLSEPEAPEQPANHARGPEQGSKQDSSPSPRAEEELLQRCISLAMPRRRTQVPGSRRRKPRALRSDIRPTEITQKCQEEVAGSDPASDLDSVEWQAIQEGANSIVTWLHQAAAKASLEASSESDSLLSLVSGVSAGSTLQPSKLRKGRKPAAEAGGAWRPEKRGTTSTKINGSPRLPNGPEKAKGTQKMMAGESTMLRGRTVIYSAGPASRTQSKGISGPCTTPKKTGTSGTTQPETVTKAPSPEQQRSRSLHRPGKISELAALRHPPRSATPPARLAKTPSSSSSQTSPASQPLPRRSPLATPTGGPLPGPGGSLVPKSPARALLAKQHKTQKSPVRIPFMQRPARRVPPPLARPSPEPGSRGRAGAEGTPGARGSRLGLVRMASARSSGSESSDRSGFRRQLTFIKESPGLLRRRRSELSSADSTASTSQAASPRRGRPALPAVFLCSSRCDELRVSPRQPLAAQRSPQAKPGLAPLAPRRTSSESPSRLPVRASPGRPETVKRYASLPHISVSRRSDSAVSVPTTQANATRRGSDGEARPLPRVAPPGTTWRRIKDEDVPHILRSTLPATALPLRVSSPEDSPAGTPQRKTSDAVVQTEDVATSKTNSSTSPSLESRDPPQAPASGPVAPQGSDVDGPVLTKPPASAPFPHEGLSAVIAGFPTSRHGSPSRAARVPPFNYVPSPMAAATMASDSAVEKAPVSSPASLLE.

Residues M5–Q59 are a coiled coil. Disordered stretches follow at residues G97–F120 and V248–N269. ARM repeat units follow at residues P301–D341, A472–W511, I515–A555, S557–S602, E608–A647, and P650–A689. Residues A832–L856 are a coiled coil. Disordered regions lie at residues S859–A901, C1061–Q1143, and S1165–F1216. The segment covering D861–D870 has biased composition (low complexity). Copy 1 of the repeat occupies L1049–S1068. Residues L1049 to S1565 form a 5 X 20 AA approximate repeat of F-X-V-E-X-T-P-X-C-F-S-R-X-S-S-L-S-S-L-S region. Positions L1049 to S1565 are interaction with CTNNB1. Residues Q1077–S1086 are compositionally biased toward polar residues. Positions E1092–A1103 are enriched in low complexity. Residues T1133–Q1143 are compositionally biased toward polar residues. The stretch at N1140–G1159 is repeat 2. Repeat 3 spans residues F1250–A1269. 6 disordered regions span residues E1290–D1323, R1368–L1480, F1493–P1631, S1699–P2003, P2022–E2122, and T2135–E2274. Polar residues predominate over residues T1374–G1397. Repeat unit 4 spans residues D1375 to T1394. Basic and acidic residues predominate over residues S1399 to K1411. Over residues R1455–R1470 the composition is skewed to polar residues. Residues L1517–P1529 show a composition bias toward basic and acidic residues. Copy 5 of the repeat occupies L1546 to S1565. Residues S1556 to A1574 show a composition bias toward low complexity. S1563 and S1565 each carry phosphoserine. Over residues P1608 to A1624 the composition is skewed to basic residues. Composition is skewed to low complexity over residues S1780 to T1795 and L1839 to G1868. The tract at residues S1792–L1871 is required for localization to microtubules and function in microtubule stabilization. Residue S1861 is modified to Phosphoserine. A compositionally biased stretch (pro residues) spans R1910–E1921. Composition is skewed to low complexity over residues R1945 to E1955 and L1983 to S1997. Residues G2037–T2114 form an interaction with MAPRE1 and MAPRE3 region. Over residues D2165–L2179 the composition is skewed to polar residues.

The protein belongs to the adenomatous polyposis coli (APC) family. In terms of assembly, interacts with PSRC1. Interacts with MAPRE3. Interacts with APC, CTNNB1, TP53BP2, MAPRE1 and possibly with AXIN2. In terms of tissue distribution, expressed in brain and other neural tissues.

It localises to the cytoplasm. The protein localises to the cytoskeleton. It is found in the golgi apparatus. The protein resides in the perinuclear region. In terms of biological role, stabilizes microtubules and may regulate actin fiber dynamics through the activation of Rho family GTPases. May also function in Wnt signaling by promoting the rapid degradation of CTNNB1. In Mus musculus (Mouse), this protein is Adenomatous polyposis coli protein 2 (Apc2).